The sequence spans 458 residues: ATP synthase subunit beta (458 aa).

ATP is bound at residue 148-155; it reads GGAGVGKT.

This sequence belongs to the ATPase alpha/beta chains family. In terms of assembly, F-type ATPases have 2 components, CF(1) - the catalytic core - and CF(0) - the membrane proton channel. CF(1) has five subunits: alpha(3), beta(3), gamma(1), delta(1), epsilon(1). CF(0) has three main subunits: a(1), b(2) and c(9-12). The alpha and beta chains form an alternating ring which encloses part of the gamma chain. CF(1) is attached to CF(0) by a central stalk formed by the gamma and epsilon chains, while a peripheral stalk is formed by the delta and b chains.

Its subcellular location is the cell inner membrane. The enzyme catalyses ATP + H2O + 4 H(+)(in) = ADP + phosphate + 5 H(+)(out). In terms of biological role, produces ATP from ADP in the presence of a proton gradient across the membrane. The catalytic sites are hosted primarily by the beta subunits. This is ATP synthase subunit beta from Shewanella woodyi (strain ATCC 51908 / MS32).